The primary structure comprises 1085 residues: Tudor domain-containing protein 7B (1085 aa).

The region spanning 3–76 is the HTH OST-type 1 domain; it reads DEELVKKMVR…SGEVMCHATT (74 aa). 3 disordered regions span residues 112–183, 200–228, and 297–341; these read APLV…PEKR, RNPQ…SAPY, and PAKE…KALS. Residues 203–216 are compositionally biased toward polar residues; sequence QHINVPSNLNENTT. The 71-residue stretch at 229–299 folds into the HTH OST-type 2 domain; it reads SPKLVQSRLQ…PQELLLYPAK (71 aa). The segment covering 322–335 has biased composition (polar residues); it reads TQRPSLTAKSNTPE. An HTH OST-type 3 domain is found at 340-410; the sequence is LSPDLKQKLG…PKRAILYAKV (71 aa). 2 Tudor domains span residues 496 to 554 and 686 to 743; these read SPSP…FYRL and RPFC…LLRD. Over residues 843–853 the composition is skewed to polar residues; the sequence is NVPTATQTSSL. The interval 843–888 is disordered; the sequence is NVPTATQTSSLKTDRGDKALHTPKKTSPPLGSKSTPAGSPPERLSL.

It localises to the cytoplasm. Its function is as follows. Component of specific cytoplasmic RNA granules involved in post-transcriptional regulation of specific genes: probably acts by binding to specific mRNAs and regulating their translation. Probably required during spermatogenesis. The sequence is that of Tudor domain-containing protein 7B (tdrd7b) from Danio rerio (Zebrafish).